The primary structure comprises 141 residues: Large ribosomal subunit protein uL11A (141 aa).

It belongs to the universal ribosomal protein uL11 family. As to quaternary structure, part of the ribosomal stalk of the 50S ribosomal subunit. Interacts with L10 and the large rRNA to form the base of the stalk. L10 forms an elongated spine to which L12 dimers bind in a sequential fashion forming a multimeric L10(L12)X complex. In terms of processing, one or more lysine residues are methylated.

Functionally, forms part of the ribosomal stalk which helps the ribosome interact with GTP-bound translation factors. This is Large ribosomal subunit protein uL11A from Bacillus cereus (strain ATCC 14579 / DSM 31 / CCUG 7414 / JCM 2152 / NBRC 15305 / NCIMB 9373 / NCTC 2599 / NRRL B-3711).